The sequence spans 123 residues: Small ribosomal subunit protein uS12 (123 aa).

A disordered region spans residues 1–29 (MPTINQLIRKKRQSSASRKKSPALQKCPQ). Residues 8 to 21 (IRKKRQSSASRKKS) show a composition bias toward basic residues. D89 is modified (3-methylthioaspartic acid).

Belongs to the universal ribosomal protein uS12 family. In terms of assembly, part of the 30S ribosomal subunit. Contacts proteins S8 and S17. May interact with IF1 in the 30S initiation complex.

Its function is as follows. With S4 and S5 plays an important role in translational accuracy. In terms of biological role, interacts with and stabilizes bases of the 16S rRNA that are involved in tRNA selection in the A site and with the mRNA backbone. Located at the interface of the 30S and 50S subunits, it traverses the body of the 30S subunit contacting proteins on the other side and probably holding the rRNA structure together. The combined cluster of proteins S8, S12 and S17 appears to hold together the shoulder and platform of the 30S subunit. The polypeptide is Small ribosomal subunit protein uS12 (Chlamydia abortus (strain DSM 27085 / S26/3) (Chlamydophila abortus)).